Reading from the N-terminus, the 166-residue chain is Transcriptional repressor NrdR (166 aa).

The segment at 3–34 (CPFCGHDDTQVKDSRSTEDGVAIRRRRVCSAC) is a zinc-finger region. The ATP-cone domain maps to 49 to 139 (LSVTKADGRR…VYRDFREVEA (91 aa)). A disordered region spans residues 146–166 (DMKPIPGETDTPSPDDSQETP).

Belongs to the NrdR family. The cofactor is Zn(2+).

Functionally, negatively regulates transcription of bacterial ribonucleotide reductase nrd genes and operons by binding to NrdR-boxes. The protein is Transcriptional repressor NrdR of Gluconobacter oxydans (strain 621H) (Gluconobacter suboxydans).